A 390-amino-acid polypeptide reads, in one-letter code: Large ribosomal subunit protein uL3y (390 aa).

The disordered stretch occupies residues 1–36 (MSHRKFEHPRHGSLGFLPRKRASRHRGKVKAFPKDD). Positions 18–31 (PRKRASRHRGKVKA) are enriched in basic residues.

It belongs to the universal ribosomal protein uL3 family.

The protein resides in the cytoplasm. The sequence is that of Large ribosomal subunit protein uL3y (ARP2) from Arabidopsis thaliana (Mouse-ear cress).